The chain runs to 317 residues: NAD kinase (317 aa).

Aspartate 82 (proton acceptor) is an active-site residue. Residues 82–83 (DG), arginine 87, 157–158 (NE), aspartate 187, and 198–203 (TAYAFS) contribute to the NAD(+) site.

This sequence belongs to the NAD kinase family. A divalent metal cation serves as cofactor.

The protein resides in the cytoplasm. The enzyme catalyses NAD(+) + ATP = ADP + NADP(+) + H(+). Its function is as follows. Involved in the regulation of the intracellular balance of NAD and NADP, and is a key enzyme in the biosynthesis of NADP. Catalyzes specifically the phosphorylation on 2'-hydroxyl of the adenosine moiety of NAD to yield NADP. This is NAD kinase from Corynebacterium diphtheriae (strain ATCC 700971 / NCTC 13129 / Biotype gravis).